A 329-amino-acid chain; its full sequence is Transmembrane protein I329L (329 aa).

Positions 1–31 (MLRVFIFFVFLGSGLAGKVKSPITCKYFISK) are cleaved as a signal peptide. N-linked (GlcNAc...) asparagine; by host glycans are attached at residues N32, N39, N44, N58, N76, N82, N101, N185, and N219. Residues 32–239 (NNTWYKYNVT…NTERYKNCYP (208 aa)) are Extracellular-facing. A helical transmembrane segment spans residues 240–260 (FVLVSIICSCISSLFLLICLL). Topologically, residues 261-329 (RTICKKYSCT…EKKVSCSRRK (69 aa)) are cytoplasmic.

The protein belongs to the asfivirus I329L family. In terms of processing, highly glycosylated.

It is found in the host endoplasmic reticulum membrane. It localises to the host Golgi apparatus membrane. In terms of biological role, viral TLR3 homolog that probably prevents TLR3 dimerization and subsequent induction of IFN. Inhibits dsRNA-stimulated activation of NF-kB and IRF3. The sequence is that of Transmembrane protein I329L from Ornithodoros (relapsing fever ticks).